Here is a 510-residue protein sequence, read N- to C-terminus: MKTKSTCAQNPNCSIMIFRPTKEEFNDFDKYIAYMESQGAHRAGLAKVIPPKEWRARQSYDNISNILIATPLQQVVSGQAGVFTQYHKKKKAMTVGQYRHLANSKKYQTPPHLDFEDLERKYWKNRLYESPIYGADVSGSLFDGKTQQWNVGHLGTIQDLLEQECGIVIEGVNTPYLYFGMWKTSFAWHTEDMDLYSINYLHFGQPKTWYAVPPEHGRRLELLAKELFPGSSQGCQAFLRHKVALISPTVLKENGIPFGRITQEAGEFMVTFPYGYHAGFNHGFNCAEAINFATPRWIDYGKVASQCSCGEARVSFSMDAFVRILQPERYEMWKRGQDQAVVDHTEAMGPTSQELTTWRVIQAPRKTWGLKHLRLRQVSRCLLPVATDSNIANNTQMCHTSRQAADSKGDEVQESDPAIAPPYPLGLSSPGHMSTGKRGLGRRPCELGVQESTNGAPVKRRLPEGRDDRSPSPELQSQSVTGDLIVNSDLVNPGPQHPVTASEGGLTSDP.

One can recognise a JmjN domain in the interval 15–57 (IMIFRPTKEEFNDFDKYIAYMESQGAHRAGLAKVIPPKEWRAR). Residues Glu23 and Glu24 each carry the polyADP-ribosyl glutamic acid modification. Tyr133 serves as a coordination point for 2-oxoglutarate. Residues 143-309 (DGKTQQWNVG…YGKVASQCSC (167 aa)) form the JmjC domain. Fe cation contacts are provided by His189 and Glu191. 2-oxoglutarate-binding residues include Asn199 and Lys207. Positions 235 and 241 each coordinate Zn(2+). Residue Lys242 coordinates 2-oxoglutarate. Residue His277 coordinates Fe cation. Residues Cys307 and Cys309 each coordinate Zn(2+). The tract at residues 397–510 (MCHTSRQAAD…ASEGGLTSDP (114 aa)) is disordered. The segment covering 461–471 (RLPEGRDDRSP) has biased composition (basic and acidic residues).

Belongs to the JHDM3 histone demethylase family. Fe(2+) serves as cofactor. Post-translationally, ubiquitinated via 'Lys-63'-linked ubiquitin chains. Deubiquitinated by USP14 with the help of TRIM14 leading to stabilization.

The protein resides in the nucleus. It carries out the reaction N(6),N(6),N(6)-trimethyl-L-lysyl(9)-[histone H3] + 2 2-oxoglutarate + 2 O2 = N(6)-methyl-L-lysyl(9)-[histone H3] + 2 formaldehyde + 2 succinate + 2 CO2. Its function is as follows. Histone demethylase that specifically demethylates 'Lys-9' of histone H3, thereby playing a central role in histone code. Does not demethylate histone H3 'Lys-4', H3 'Lys-27', H3 'Lys-36' nor H4 'Lys-20'. Demethylates both di- and trimethylated H3 'Lys-9' residue, while it has no activity on monomethylated residues. Demethylation of Lys residue generates formaldehyde and succinate. The polypeptide is Lysine-specific demethylase 4D (Kdm4d) (Rattus norvegicus (Rat)).